We begin with the raw amino-acid sequence, 750 residues long: Photosystem I P700 chlorophyll a apoprotein A1 (750 aa).

Transmembrane regions (helical) follow at residues V70–A93, L156–H179, L195–L219, I291–Y309, W346–Y369, L385–V411, A433–H455, and F531–L549. The [4Fe-4S] cluster site is built by C573 and C582. 2 helical membrane-spanning segments follow: residues H589–W610 and L664–F686. H675 provides a ligand contact to chlorophyll a'. 2 residues coordinate chlorophyll a: M683 and Y691. W692 serves as a coordination point for phylloquinone. A helical membrane pass occupies residues A724–A744.

It belongs to the PsaA/PsaB family. As to quaternary structure, the PsaA/B heterodimer binds the P700 chlorophyll special pair and subsequent electron acceptors. PSI consists of a core antenna complex that captures photons, and an electron transfer chain that converts photonic excitation into a charge separation. The eukaryotic PSI reaction center is composed of at least 11 subunits. It depends on P700 is a chlorophyll a/chlorophyll a' dimer, A0 is one or more chlorophyll a, A1 is one or both phylloquinones and FX is a shared 4Fe-4S iron-sulfur center. as a cofactor.

Its subcellular location is the plastid. It localises to the chloroplast thylakoid membrane. The enzyme catalyses reduced [plastocyanin] + hnu + oxidized [2Fe-2S]-[ferredoxin] = oxidized [plastocyanin] + reduced [2Fe-2S]-[ferredoxin]. In terms of biological role, psaA and PsaB bind P700, the primary electron donor of photosystem I (PSI), as well as the electron acceptors A0, A1 and FX. PSI is a plastocyanin-ferredoxin oxidoreductase, converting photonic excitation into a charge separation, which transfers an electron from the donor P700 chlorophyll pair to the spectroscopically characterized acceptors A0, A1, FX, FA and FB in turn. Oxidized P700 is reduced on the lumenal side of the thylakoid membrane by plastocyanin. This Oryza nivara (Indian wild rice) protein is Photosystem I P700 chlorophyll a apoprotein A1.